Here is a 268-residue protein sequence, read N- to C-terminus: Type III pantothenate kinase (268 aa).

Aspartate 18 to threonine 25 contributes to the ATP binding site. Substrate contacts are provided by residues tyrosine 108 and glycine 115 to arginine 118. The Proton acceptor role is filled by aspartate 117. Aspartate 138 is a K(+) binding site. Threonine 141 provides a ligand contact to ATP. Threonine 193 lines the substrate pocket.

The protein belongs to the type III pantothenate kinase family. As to quaternary structure, homodimer. Requires NH4(+) as cofactor. The cofactor is K(+).

It is found in the cytoplasm. The enzyme catalyses (R)-pantothenate + ATP = (R)-4'-phosphopantothenate + ADP + H(+). Its pathway is cofactor biosynthesis; coenzyme A biosynthesis; CoA from (R)-pantothenate: step 1/5. Catalyzes the phosphorylation of pantothenate (Pan), the first step in CoA biosynthesis. In Chlorobaculum parvum (strain DSM 263 / NCIMB 8327) (Chlorobium vibrioforme subsp. thiosulfatophilum), this protein is Type III pantothenate kinase.